The following is a 48-amino-acid chain: uncharacterized protein (48 aa).

The helical transmembrane segment at 21-43 threads the bilayer; that stretch reads SIFVSLGVFAVSVAILKSRLGNF.

It localises to the membrane. This is an uncharacterized protein from Schizosaccharomyces pombe (strain 972 / ATCC 24843) (Fission yeast).